Consider the following 286-residue polypeptide: uncharacterized protein (286 aa).

Positions 1–47 are disordered; the sequence is MAIPFLHKGGSDDSTHHHTHDYDHHNHDHHGHDHHSHDSSSNSSSEA. Positions 9–26 are enriched in basic and acidic residues; sequence GGSDDSTHHHTHDYDHHN. 93-100 serves as a coordination point for GTP; it reads GPVGSGKT.

This sequence belongs to the SIMIBI class G3E GTPase family. UreG subfamily.

It localises to the cytoplasm. The protein localises to the nucleus. Its function is as follows. Probably facilitates nickel incorporation. This is an uncharacterized protein from Schizosaccharomyces pombe (strain 972 / ATCC 24843) (Fission yeast).